The primary structure comprises 524 residues: Fusicoccadiene C-8 hydroxylase (524 aa).

Residues 16 to 36 traverse the membrane as a helical segment; the sequence is LQLLCIGPLVYACVSFIIKIV. N126 and N344 each carry an N-linked (GlcNAc...) asparagine glycan. Heme is bound at residue C465. N496 carries N-linked (GlcNAc...) asparagine glycosylation.

It belongs to the cytochrome P450 family. Requires heme as cofactor.

It is found in the membrane. Its pathway is mycotoxin biosynthesis. In terms of biological role, cytochrome P450 monooxygenase; part of the 2 gene clusters that mediate the biosynthesis of fusicoccins, diterpene glucosides that display phytohormone-like activity and function as potent activators of plasma membrane H(+)-ATPases in plants by modifying 14-3-3 proteins and cause the plant disease constriction canker. The first step in the pathway is performed by the fusicoccadiene synthase PaFS that possesses both prenyl transferase and terpene cyclase activity, converting isopentenyl diphosphate and dimethylallyl diphosphate into geranylgeranyl diphosphate (GGDP) and successively converting GGDP into fusicocca-2,10(14)-diene, a precursor for fusicoccin H. The second step is the oxidation at the C-8 position by the cytochrome P450 monooxygenase PaP450-2 to yield fusicocca-2,10(14)-diene-8-beta-ol. The cytochrome P450 monooxygenase PaP450-1 then catalyzes the hydroxylation at the C-16 position to produce fusicocca-2,10(14)-diene-8-beta,16-diol. The dioxygenase fc-dox then catalyzes the 16-oxydation of fusicocca-2,10(14)-diene-8-beta,16-diol to yield an aldehyde (8-beta-hydroxyfusicocca-1,10(14)-dien-16-al). The short-chain dehydrogenase/reductase fc-sdr catalyzes the reduction of the aldehyde to yield fusicocca-1,10(14)-diene-8-beta,16-diol. The next step is the hydroxylation at C-9 performed by the cytochrome P450 monooxygenase PaP450-3 that leads to fusicoccin H aglycon which is glycosylated to fusicoccin H by the O-glycosyltransferase PaGT. Hydroxylation at C-12 by the cytochrome P450 monooxygenase PaP450-4 leads then to the production of fusicoccin Q and is followed by methylation by the O-methyltransferase PaMT to yield fusicoccin P. Fusicoccin P is further converted to fusicoccin J via prenylation by the O-glucose prenyltransferase PaPT. Cytochrome P450 monooxygenase PaP450-5 then performs hydroxylation at C-19 to yield dideacetyl-fusicoccin A which is acetylated to 3'-O-deacetyl-fusicoccin A by the O-acetyltransferase PaAT-2. Finally, a another acetylation by the O-acetyltransferase PaAT-1 yields fusicoccin A. This Phomopsis amygdali (Fusicoccum amygdali) protein is Fusicoccadiene C-8 hydroxylase.